The sequence spans 155 residues: Fibroblast growth factor 2 (155 aa).

Residues 1–9 constitute a propeptide that is removed on maturation; that stretch reads MAAGSITTL. Residues 1–20 form a disordered region; that stretch reads MAAGSITTLPALPEDGGSSA. Residue Asn36 participates in heparin binding. Positions 46 to 48 match the Cell attachment site; atypical motif; that stretch reads DGR. A Phosphotyrosine; by TEC modification is found at Tyr82. Positions 88–90 match the Cell attachment site; atypical motif; sequence DGR. A Glycyl lysine isopeptide (Lys-Gly) (interchain with G-Cter in SUMO1) cross-link involves residue Lys95. The interval 128–144 is heparin-binding; that stretch reads KRTGQYKLGPKTGPGQK.

Belongs to the heparin-binding growth factors family. As to quaternary structure, monomer. Homodimer. Interacts with FGFR1, FGFR2, FGFR3 and FGFR4. Affinity between fibroblast growth factors (FGFs) and their receptors is increased by heparan sulfate glycosaminoglycans that function as coreceptors. Interacts with CSPG4, FGFBP1 and TEC. Found in a complex with FGFBP1, FGF1 and FGF2. Interacts with FGFBP3. Interacts with integrin ITGAV:ITGB3; the interaction is required for FGF2 signaling. Interacts with SNORC (via the extracellular domain). Interacts with glypican GPC3. Phosphorylation at Tyr-82 regulates FGF2 unconventional secretion.

It is found in the secreted. The protein localises to the nucleus. Acts as a ligand for FGFR1, FGFR2, FGFR3 and FGFR4. Also acts as an integrin ligand which is required for FGF2 signaling. Binds to integrin ITGAV:ITGB3. Plays an important role in the regulation of cell survival, cell division, cell differentiation and cell migration. Functions as a potent mitogen in vitro. Can induce angiogenesis. Mediates phosphorylation of ERK1/2 and thereby promotes retinal lens fiber differentiation. In Ovis aries (Sheep), this protein is Fibroblast growth factor 2 (FGF2).